A 583-amino-acid polypeptide reads, in one-letter code: Phosphoglucomutase, cytoplasmic 2 (583 aa).

Alpha-D-glucose 1,6-bisphosphate contacts are provided by Arg-25 and Ser-124. Ser-124 acts as the Phosphoserine intermediate in catalysis. Mg(2+)-binding residues include Ser-124, Asp-300, Asp-302, and Asp-304. Ser-124 bears the Phosphoserine mark. Alpha-D-glucose 1,6-bisphosphate is bound by residues Asp-304, Arg-305, Thr-368, Glu-387, Ser-389, and Lys-400.

Belongs to the phosphohexose mutase family. In terms of assembly, monomer. Requires Mg(2+) as cofactor.

Its subcellular location is the cytoplasm. The catalysed reaction is alpha-D-glucose 1-phosphate = alpha-D-glucose 6-phosphate. It catalyses the reaction O-phospho-L-seryl-[protein] + alpha-D-glucose 1-phosphate = alpha-D-glucose 1,6-bisphosphate + L-seryl-[protein]. The enzyme catalyses alpha-D-glucose 1,6-bisphosphate + L-seryl-[protein] = O-phospho-L-seryl-[protein] + alpha-D-glucose 6-phosphate. In terms of biological role, catalyzes the reversible isomerization of alpha-D-glucose 1-phosphate to alpha-D-glucose 6-phosphate. The mechanism proceeds via the intermediate compound alpha-D-glucose 1,6-bisphosphate. This enzyme participates in both the breakdown and synthesis of glucose. The sequence is that of Phosphoglucomutase, cytoplasmic 2 from Zea mays (Maize).